Here is a 283-residue protein sequence, read N- to C-terminus: Acetyl-coenzyme A carboxylase carboxyl transferase subunit beta (283 aa).

Positions 29-283 (LWISCPKCQQ…VKIHSMKGAF (255 aa)) constitute a CoA carboxyltransferase N-terminal domain. Zn(2+)-binding residues include cysteine 33, cysteine 36, cysteine 51, and cysteine 54. The segment at 33 to 54 (CPKCQQSIYHKDLGKYKTCPNC) adopts a C4-type zinc-finger fold.

The protein belongs to the AccD/PCCB family. Acetyl-CoA carboxylase is a heterohexamer composed of biotin carboxyl carrier protein (AccB), biotin carboxylase (AccC) and two subunits each of ACCase subunit alpha (AccA) and ACCase subunit beta (AccD). The cofactor is Zn(2+).

It localises to the cytoplasm. The catalysed reaction is N(6)-carboxybiotinyl-L-lysyl-[protein] + acetyl-CoA = N(6)-biotinyl-L-lysyl-[protein] + malonyl-CoA. The protein operates within lipid metabolism; malonyl-CoA biosynthesis; malonyl-CoA from acetyl-CoA: step 1/1. Component of the acetyl coenzyme A carboxylase (ACC) complex. Biotin carboxylase (BC) catalyzes the carboxylation of biotin on its carrier protein (BCCP) and then the CO(2) group is transferred by the transcarboxylase to acetyl-CoA to form malonyl-CoA. The sequence is that of Acetyl-coenzyme A carboxylase carboxyl transferase subunit beta from Ligilactobacillus salivarius (strain UCC118) (Lactobacillus salivarius).